The sequence spans 97 residues: Small cell adhesion glycoprotein (97 aa).

Over 1 to 36 (MTSLLTTPSPREELMTTPILQPTEALSPEDGASTAL) the chain is Extracellular. O-linked (GalNAc...) threonine glycosylation occurs at T2. S3 is a glycosylation site (O-linked (GalNAc...) serine). O-linked (GalNAc...) threonine glycosylation is found at T6 and T7. S9 carries an O-linked (GalNAc...) serine glycan. 3 O-linked (GalNAc...) threonine glycosylation sites follow: T16, T17, and T23. Residues 37-57 (IAVVITVVFLTLLSVVILIFF) traverse the membrane as a helical; Signal-anchor for type III membrane protein segment. At 58–97 (YLYKNKGSYVTYEPTEGEPSAIVQMESDLAKGSEKEEYFI) the chain is on the cytoplasmic side.

Belongs to the SMAGP family. Post-translationally, O-glycosylated. The O-glycan is modified with sialic acid residues. As to expression, detected in breast, endometrium, colon and biliary tract. Detected in polarized epithelial structures characterized by cell-cell adhesion (at protein level).

It localises to the cell membrane. It is found in the cytoplasmic vesicle membrane. May play a role in epithelial cell-cell contacts. May play a role in tumor invasiveness and metastasis formation. The protein is Small cell adhesion glycoprotein (SMAGP) of Homo sapiens (Human).